Reading from the N-terminus, the 752-residue chain is Primary amine oxidase (752 aa).

Positions 1–27 (MAILSPRKTALALAVALSCAWQSPAFA) are cleaved as a signal peptide. Substrate-binding positions include 408–419 (YLDSGDYGMGTL) and 490–495 (VGNYDY). Residue aspartate 410 is the Proton acceptor of the active site. Tyrosine 493 serves as the catalytic Schiff-base intermediate with substrate; via topaquinone. At tyrosine 493 the chain carries 2',4',5'-topaquinone. Positions 551 and 553 each coordinate Cu cation. Aspartate 560, leucine 561, aspartate 562, glutamate 600, tyrosine 694, aspartate 697, glutamate 699, and aspartate 705 together coordinate Ca(2+). Aspartate 560 lines the Mn(2+) pocket. Residue aspartate 562 participates in Mn(2+) binding. Residue aspartate 705 participates in Mn(2+) binding. Histidine 716 is a binding site for Cu cation.

It belongs to the copper/topaquinone oxidase family. In terms of assembly, homodimer. The cofactor is Cu cation. It depends on Ca(2+) as a cofactor. L-topaquinone serves as cofactor. Mn(2+) is required as a cofactor. In terms of processing, topaquinone (TPQ) is generated by copper-dependent autoxidation of a specific tyrosyl residue.

It localises to the periplasm. The catalysed reaction is a primary methyl amine + O2 + H2O = an aldehyde + H2O2 + NH4(+). Active on tyramine, tryptamine, beta-phenethylamine and dopamine. The chain is Primary amine oxidase (maoA) from Klebsiella michiganensis (strain ATCC 8724 / DSM 4798 / JCM 20051 / NBRC 3318 / NRRL B-199 / KCTC 1686 / BUCSAV 143 / CCM 1901).